The chain runs to 453 residues: G-protein coupled receptor 39 (453 aa).

Topologically, residues 1–34 (MASPSLPGSDCSQIIDHSHVPEFEVATWIKITLI) are extracellular. 2 cysteine pairs are disulfide-bonded: cysteine 11-cysteine 191 and cysteine 108-cysteine 210. Histidine 17 and histidine 19 together coordinate Zn(2+). A helical membrane pass occupies residues 35 to 55 (LVYLIIFVMGLLGNSATIRVT). The Cytoplasmic portion of the chain corresponds to 56-69 (QVLQKKGYLQKEVT). Residues 70–89 (DHMVSLACSDILVFLIGMPM) form a helical membrane-spanning segment. Over 90–109 (EFYSIIWNPLTTSSYTLSCK) the chain is Extracellular. The chain crosses the membrane as a helical span at residues 110–131 (LHTFLFEACSYATLLHVLTLSF). Residues 132 to 151 (ERYIAICHPFRYKAVSGPCQ) lie on the Cytoplasmic side of the membrane. Residues 152–172 (VKLLIGFVWVTSALVALPLLF) traverse the membrane as a helical segment. Residues 173-217 (AMGTEYPLVNVPSHRGLTCNRSSTRHHEQPETSNMSICTNLSSRW) lie on the Extracellular side of the membrane. N-linked (GlcNAc...) asparagine glycosylation is found at asparagine 192, asparagine 206, and asparagine 212. A helical membrane pass occupies residues 218 to 242 (TVFQSSIFGAFVVYLVVLLSVAFMC). Topologically, residues 243-283 (WNMMQVLMKSQKGSLAGGTRPPQLRKSESEESRTARRQTII) are cytoplasmic. The segment at 255–274 (GSLAGGTRPPQLRKSESEES) is disordered. Residues 284–305 (FLRLIVVTLAVCWMPNQIRRIM) traverse the membrane as a helical segment. Over 306 to 323 (AAAKPKHDWTRSYFRAYM) the chain is Extracellular. The chain crosses the membrane as a helical span at residues 324-344 (ILLPFSETFFYLSSVINPLLY). Over 345–453 (TVSSQQFRRV…AENGFQEHEV (109 aa)) the chain is Cytoplasmic. Serine 396 bears the Phosphoserine mark. Residues 415–453 (SEAEPQSKSQSLSLESLEPNSGAKPANSAAENGFQEHEV) form a disordered region. Residues 418 to 435 (EPQSKSQSLSLESLEPNS) show a composition bias toward low complexity.

It belongs to the G-protein coupled receptor 1 family. Interacts with HTR1A. Interacts with GALR1. As to expression, expressed in many tissues, including the stomach, intestine and hypothalamus.

The protein localises to the cell membrane. Its function is as follows. Zinc-sensing receptor that can sense changes in extracellular Zn(2+), mediate Zn(2+) signal transmission, and participates in the regulation of numerous physiological processes including glucose homeostasis regulation, gastrointestinal mobility, hormone secretion and cell death. Activation by Zn(2+) in keratinocytes increases the intracellular concentration of Ca(2+) and activates the ERK/MAPK and PI3K/AKT signaling pathways leading to epithelial repair. Plays an essential role in normal wound healing by inducing the production of cytokines including the major inflammatory cytokine IL6 via the PKC/MAPK/CEBPB pathway. Regulates adipose tissue metabolism, especially lipolysis, and regulates the function of lipases, such as hormone-sensitive lipase and adipose triglyceride lipase. Plays a role in the inhibition of cell death and protects against oxidative, endoplasmic reticulum and mitochondrial stress by inducing secretion of the cytoprotective pigment epithelium-derived growth factor (PEDF) and probably other protective transcripts in a GNA13/RHOA/SRE-dependent manner. Forms dynamic heteroreceptor complexes with HTR1A and GALR1 depending on cell type or specific physiological states, resulting in signaling diversity: HTR1A-GPR39 shows additive increase in signaling along the serum response element (SRE) and NF-kappa-B pathways while GALR1 acts as an antagonist blocking SRE. In Homo sapiens (Human), this protein is G-protein coupled receptor 39 (GPR39).